We begin with the raw amino-acid sequence, 24 residues long: DYE-linked aldehyde dehydrogenase, alpha chain (24 aa).

Heterotetramer composed of an alpha, a beta and two gamma chains. Requires Mo-molybdopterin cytosine dinucleotide as cofactor.

Functionally, active with aldehydes and formate esters as substrates. The polypeptide is DYE-linked aldehyde dehydrogenase, alpha chain (Amycolatopsis methanolica).